We begin with the raw amino-acid sequence, 133 residues long: Small ribosomal subunit protein uS8 (133 aa).

The protein belongs to the universal ribosomal protein uS8 family. In terms of assembly, part of the 30S ribosomal subunit. Contacts proteins S5 and S12.

Its function is as follows. One of the primary rRNA binding proteins, it binds directly to 16S rRNA central domain where it helps coordinate assembly of the platform of the 30S subunit. The polypeptide is Small ribosomal subunit protein uS8 (Synechococcus sp. (strain CC9605)).